We begin with the raw amino-acid sequence, 369 residues long: UDP-N-acetylglucosamine--N-acetylmuramyl-(pentapeptide) pyrophosphoryl-undecaprenol N-acetylglucosamine transferase (369 aa).

UDP-N-acetyl-alpha-D-glucosamine is bound by residues 10-12, asparagine 124, arginine 166, serine 196, isoleucine 251, and glutamine 296; that span reads TAG.

This sequence belongs to the glycosyltransferase 28 family. MurG subfamily.

It is found in the cell membrane. It carries out the reaction di-trans,octa-cis-undecaprenyl diphospho-N-acetyl-alpha-D-muramoyl-L-alanyl-D-glutamyl-meso-2,6-diaminopimeloyl-D-alanyl-D-alanine + UDP-N-acetyl-alpha-D-glucosamine = di-trans,octa-cis-undecaprenyl diphospho-[N-acetyl-alpha-D-glucosaminyl-(1-&gt;4)]-N-acetyl-alpha-D-muramoyl-L-alanyl-D-glutamyl-meso-2,6-diaminopimeloyl-D-alanyl-D-alanine + UDP + H(+). The protein operates within cell wall biogenesis; peptidoglycan biosynthesis. Functionally, cell wall formation. Catalyzes the transfer of a GlcNAc subunit on undecaprenyl-pyrophosphoryl-MurNAc-pentapeptide (lipid intermediate I) to form undecaprenyl-pyrophosphoryl-MurNAc-(pentapeptide)GlcNAc (lipid intermediate II). This Acetivibrio thermocellus (strain ATCC 27405 / DSM 1237 / JCM 9322 / NBRC 103400 / NCIMB 10682 / NRRL B-4536 / VPI 7372) (Clostridium thermocellum) protein is UDP-N-acetylglucosamine--N-acetylmuramyl-(pentapeptide) pyrophosphoryl-undecaprenol N-acetylglucosamine transferase.